Here is a 123-residue protein sequence, read N- to C-terminus: Small ribosomal subunit protein uS12 (123 aa).

Asp89 carries the post-translational modification 3-methylthioaspartic acid. The tract at residues Thr101–Lys123 is disordered. Basic residues predominate over residues Arg110 to Lys123.

This sequence belongs to the universal ribosomal protein uS12 family. In terms of assembly, part of the 30S ribosomal subunit. Contacts proteins S8 and S17. May interact with IF1 in the 30S initiation complex.

With S4 and S5 plays an important role in translational accuracy. Its function is as follows. Interacts with and stabilizes bases of the 16S rRNA that are involved in tRNA selection in the A site and with the mRNA backbone. Located at the interface of the 30S and 50S subunits, it traverses the body of the 30S subunit contacting proteins on the other side and probably holding the rRNA structure together. The combined cluster of proteins S8, S12 and S17 appears to hold together the shoulder and platform of the 30S subunit. The polypeptide is Small ribosomal subunit protein uS12 (Paramagnetospirillum magneticum (strain ATCC 700264 / AMB-1) (Magnetospirillum magneticum)).